The chain runs to 365 residues: MTHPQKTPLYDIHKERGGKIIDFGGWYLPVQFTGIIDEVMTTRKEAGLFDVSHMGEIIVEGPKALEYLQKMVPNDVARLKPGKILYTPMCYENGGTVDDFLIYKMDENKFLLIVNAANTDKDFEWLQENNTEGVELKNLSDEYGQIAIQGPKAEKILQRLTDTPLKEIKFFNFKEDVDLDGVKALISRTGYTGENGFEIYIKAEETAKLWEKIEDAGENDGLKPIGLGARDVLRFEVCLPLYGNELSPEITPLEARLNPFVKLNKTEDFLGKDVLVNQKEQGLERVLVGFEMIDRGIPRTNYILMKDGQEIGFVSSGSQSPTLDKALGLGFIKPEHDQEGNEIEVKIRKKTAKAKIVKTPFYRRG.

It belongs to the GcvT family. As to quaternary structure, the glycine cleavage system is composed of four proteins: P, T, L and H.

The enzyme catalyses N(6)-[(R)-S(8)-aminomethyldihydrolipoyl]-L-lysyl-[protein] + (6S)-5,6,7,8-tetrahydrofolate = N(6)-[(R)-dihydrolipoyl]-L-lysyl-[protein] + (6R)-5,10-methylene-5,6,7,8-tetrahydrofolate + NH4(+). In terms of biological role, the glycine cleavage system catalyzes the degradation of glycine. This Natranaerobius thermophilus (strain ATCC BAA-1301 / DSM 18059 / JW/NM-WN-LF) protein is Aminomethyltransferase.